Consider the following 162-residue polypeptide: Ribosome maturation factor RimP (162 aa).

This sequence belongs to the RimP family.

Its subcellular location is the cytoplasm. In terms of biological role, required for maturation of 30S ribosomal subunits. This Leptospira interrogans serogroup Icterohaemorrhagiae serovar copenhageni (strain Fiocruz L1-130) protein is Ribosome maturation factor RimP.